Reading from the N-terminus, the 908-residue chain is Zinc finger CCCH domain-containing protein 41 (908 aa).

Residues 1-13 show a composition bias toward polar residues; the sequence is MELSVSSPKQSVL. The tract at residues 1 to 124 is disordered; sequence MELSVSSPKQ…GRGNYGSWAQ (124 aa). The segment covering 20–34 has biased composition (acidic residues); sequence SDPEEEHEISEEEDD. Polar residues-rich tracts occupy residues 48–59 and 90–105; these read SQSLEQDSSDQA and GQRV…SNPM. A C3H1-type zinc finger spans residues 200-228; the sequence is GIPRQRCRDFEERGFCLRGDMCPMEHGMN. The disordered stretch occupies residues 333-375; that stretch reads NVAPLDDSNQDAAENGCGIRDSRSTSQSVWGRMKGSNSQANSK. The segment covering 356-373 has biased composition (polar residues); sequence STSQSVWGRMKGSNSQAN. Residues 438-510 form the RRM domain; the sequence is RTLFVNYVPH…RFIKLWWANR (73 aa). Disordered stretches follow at residues 558–590, 629–695, and 807–908; these read PTFQ…LQQK, VVKR…KQRP, and RESN…QIHQ. Over residues 559 to 588 the composition is skewed to polar residues; sequence TFQTGGAPSSSEQPKPVVVTTSGPKVTPLQ. Positions 587-630 form a coiled coil; it reads LQQKKADTLERLKETLRKKQEMLEQKRNEYRKKLATLEKQGTVV. Over residues 630-647 the composition is skewed to basic and acidic residues; that stretch reads VKREEADEPDAKRVKLDT. Serine 657 carries the post-translational modification Phosphoserine. A compositionally biased stretch (polar residues) spans 677–688; that stretch reads AKLSTETPSPDS. A compositionally biased stretch (low complexity) spans 807–828; the sequence is RESNNNNNNSNSLSVSRDNLSS. A compositionally biased stretch (polar residues) spans 846-863; the sequence is KTSSTEEPENTNVSGDND. Residues 865–886 show a composition bias toward basic and acidic residues; it reads TLDKQETKESDNDNNKSNHESI. Positions 898–908 are enriched in acidic residues; that stretch reads TDEEQSEQIHQ.

The chain is Zinc finger CCCH domain-containing protein 41 from Arabidopsis thaliana (Mouse-ear cress).